We begin with the raw amino-acid sequence, 95 residues long: Protein translocase subunit SecE (95 aa).

A disordered region spans residues 1–35; that stretch reads MTDAVGSIDMPDAEDEAPESKKKSRKGGKRGKKGP. Positions 22–35 are enriched in basic residues; that stretch reads KKSRKGGKRGKKGP. A helical membrane pass occupies residues 67-87; sequence VVIVFVVVMIGLVTVLDIGFA.

Belongs to the SecE/SEC61-gamma family. As to quaternary structure, component of the Sec protein translocase complex. Heterotrimer consisting of SecY, SecE and SecG subunits. The heterotrimers can form oligomers, although 1 heterotrimer is thought to be able to translocate proteins. Interacts with the ribosome. Interacts with SecDF, and other proteins may be involved. Interacts with SecA.

It localises to the cell membrane. Its function is as follows. Essential subunit of the Sec protein translocation channel SecYEG. Clamps together the 2 halves of SecY. May contact the channel plug during translocation. This chain is Protein translocase subunit SecE, found in Streptomyces griseus.